Here is a 287-residue protein sequence, read N- to C-terminus: MAGAKEIRSKIASVQNTQKITKAMEMVAASKMRKSQDRMAASRPYAETMRKVIGHLAHGNLEYKHLYLEDRDVKRVGYLVVSTDRGLCGGLNINLFKKLLAEMKTWTDKGVQCDLAMIGSKGVSFFNSVGGNVVAQVTGMGDNPSLSELIGPVKVMLQAYDEGRLDKLYIVSNKFINTMSQVPTISQLLPLPASDDDDLKHKSWDYLYEPDPKALLDTLLRRYVESQVYQGVVENLASEQAARMVAMKAATDNGGSLIKELQLVYNKARQASITQELTEIVSGAAAV.

It belongs to the ATPase gamma chain family. F-type ATPases have 2 components, CF(1) - the catalytic core - and CF(0) - the membrane proton channel. CF(1) has five subunits: alpha(3), beta(3), gamma(1), delta(1), epsilon(1). CF(0) has three main subunits: a, b and c.

It localises to the cell inner membrane. Its function is as follows. Produces ATP from ADP in the presence of a proton gradient across the membrane. The gamma chain is believed to be important in regulating ATPase activity and the flow of protons through the CF(0) complex. This is ATP synthase gamma chain from Shigella boydii serotype 4 (strain Sb227).